The following is a 417-amino-acid chain: uncharacterized protein (417 aa).

Residues 10–30 (ALVCFSILSILVLACGCVNTP) form a helical membrane-spanning segment. Positions 84-106 (QENHPLQSNQNYEQTNGNFNEEN) are disordered. Residues 86–106 (NHPLQSNQNYEQTNGNFNEEN) are compositionally biased toward polar residues. A helical membrane pass occupies residues 148–168 (LYYIKVIDPIVGGLAGIDIYV).

It localises to the cell membrane. This is an uncharacterized protein from Methanocaldococcus jannaschii (strain ATCC 43067 / DSM 2661 / JAL-1 / JCM 10045 / NBRC 100440) (Methanococcus jannaschii).